The primary structure comprises 302 residues: Diacetylchitobiose uptake system permease protein NgcG (302 aa).

Transmembrane regions (helical) follow at residues 40–60, 99–119, 131–151, 166–186, 221–241, and 268–288; these read LLIL…MSSF, VIVV…CAYV, IYYV…VPLF, LILT…YSFF, AAVA…PVAL, and GALF…YCVF. Residues 95–288 enclose the ABC transmembrane type-1 domain; the sequence is FLNSVIVVVS…VPVLLVYCVF (194 aa).

Belongs to the binding-protein-dependent transport system permease family. In terms of assembly, the complex is composed of two ATP-binding proteins (MsiK), two transmembrane proteins (NgcF and NgcG) and a solute-binding protein (NgcE).

The protein localises to the cell membrane. In terms of biological role, part of the ABC transporter complex NgcEFG-MsiK involved in N,N'-diacetylchitobiose ((GlcNAc)2) uptake. Responsible for the translocation of the substrate across the membrane. This Streptomyces coelicolor (strain ATCC BAA-471 / A3(2) / M145) protein is Diacetylchitobiose uptake system permease protein NgcG.